The sequence spans 315 residues: Glycerol-3-phosphate dehydrogenase [NAD(P)+] (315 aa).

Positions 24, 44, 45, and 92 each coordinate NADPH. 2 residues coordinate sn-glycerol 3-phosphate: lysine 92 and glycine 120. Residue serine 124 coordinates NADPH. The sn-glycerol 3-phosphate site is built by lysine 175, aspartate 228, serine 238, arginine 239, and asparagine 240. Lysine 175 acts as the Proton acceptor in catalysis. An NADPH-binding site is contributed by arginine 239. Glutamate 265 is a binding site for NADPH.

The protein belongs to the NAD-dependent glycerol-3-phosphate dehydrogenase family.

Its subcellular location is the cytoplasm. It catalyses the reaction sn-glycerol 3-phosphate + NAD(+) = dihydroxyacetone phosphate + NADH + H(+). It carries out the reaction sn-glycerol 3-phosphate + NADP(+) = dihydroxyacetone phosphate + NADPH + H(+). Its pathway is membrane lipid metabolism; glycerophospholipid metabolism. Functionally, catalyzes the reduction of the glycolytic intermediate dihydroxyacetone phosphate (DHAP) to sn-glycerol 3-phosphate (G3P), the key precursor for phospholipid synthesis. This Synechococcus sp. (strain JA-2-3B'a(2-13)) (Cyanobacteria bacterium Yellowstone B-Prime) protein is Glycerol-3-phosphate dehydrogenase [NAD(P)+].